The primary structure comprises 463 residues: Glutamyl-tRNA reductase (463 aa).

Substrate-binding positions include 49–52 (TCNR), serine 109, 114–116 (EQQ), and glutamine 120. Residue cysteine 50 is the Nucleophile of the active site. 196 to 201 (GAGAMS) is an NADP(+) binding site.

Belongs to the glutamyl-tRNA reductase family. As to quaternary structure, homodimer.

It carries out the reaction (S)-4-amino-5-oxopentanoate + tRNA(Glu) + NADP(+) = L-glutamyl-tRNA(Glu) + NADPH + H(+). It participates in porphyrin-containing compound metabolism; protoporphyrin-IX biosynthesis; 5-aminolevulinate from L-glutamyl-tRNA(Glu): step 1/2. Functionally, catalyzes the NADPH-dependent reduction of glutamyl-tRNA(Glu) to glutamate 1-semialdehyde (GSA). This is Glutamyl-tRNA reductase from Corynebacterium glutamicum (strain R).